Reading from the N-terminus, the 196-residue chain is Large ribosomal subunit protein mL66 (196 aa).

A mitochondrion-targeting transit peptide spans 1-34; the sequence is MAALNVLVSGCGRFLRGLLTGPTVTSWARPPARG.

The protein belongs to the bacterial ribosomal protein bS18 family. Mitochondrion-specific ribosomal protein mL66 subfamily. As to quaternary structure, component of the mitochondrial ribosome small subunit (28S) which comprises a 12S rRNA and about 30 distinct proteins.

It is found in the mitochondrion. The chain is Large ribosomal subunit protein mL66 (MRPS18A) from Bos taurus (Bovine).